The chain runs to 470 residues: D-serine/D-alanine/glycine transporter (470 aa).

12 consecutive transmembrane segments (helical) span residues 30 to 50 (LIAIGGAIGTGLFMGSGKTIS), 51 to 71 (LAGPSIIFVYMIIGFMLFFVM), 102 to 122 (FTGWTYWFCWVVTGMADVVAI), 128 to 148 (FWFPGLSDWVASLSVIILLLV), 162 to 182 (FWFAMIKIVAIVSLIVVGLVM), 211 to 231 (LSGFFAGFQIAVFAFVGIELV), 256 to 276 (IIMFYVFSLIVIMSVTPWSSV), 283 to 303 (FVELFVLVGLPAAASVINFVV), 350 to 370 (FSCICLLGGVVMLYVNPSVIG), 371 to 391 (AFTMITTVSAILFMFVWTIIL), 413 to 433 (PLGKLMCWVCMAFFVFVLVLL), and 441 to 461 (QALLVTPLWFIALGLGWLFIG).

It belongs to the amino acid-polyamine-organocation (APC) superfamily. Amino acid transporter (AAT) (TC 2.A.3.1) family.

It is found in the cell inner membrane. It carries out the reaction D-alanine(in) + H(+)(in) = D-alanine(out) + H(+)(out). The enzyme catalyses D-serine(out) + H(+)(out) = D-serine(in) + H(+)(in). The catalysed reaction is glycine(in) + H(+)(in) = glycine(out) + H(+)(out). It catalyses the reaction D-cycloserine(in) + H(+)(in) = D-cycloserine(out) + H(+)(out). Its activity is regulated as follows. Uptake of D-serine is inhibited by D-alanine, D-cycloserine, glycine and at high concentrations of D-threonine. Its function is as follows. Permease that is involved in the transport across the cytoplasmic membrane of D-alanine, D-serine and glycine. Is the only transporter of D-alanine. Transports D-serine less efficiently than DsdX. In addition, in minimal media, transports the broad spectrum antibiotic D-cycloserine into the cell. Transports D-cycloserine only in minimal media, and not in a complex medium, suggesting that CycA does not play a role in D-cycloserine transport when E.coli is grown in a complex or biologically relevant medium, probably due to competition from other CycA substrates present in the medium. The polypeptide is D-serine/D-alanine/glycine transporter (cycA) (Escherichia coli O6:H1 (strain CFT073 / ATCC 700928 / UPEC)).